The following is a 358-amino-acid chain: Programmed cell death protein 2-like (358 aa).

N-acetylalanine is present on Ala2. The residue at position 20 (Ser20) is a Phosphoserine. Thr22 carries the post-translational modification Phosphothreonine.

As to expression, higher expression in lung, colon, mammary gland, cervix, stomach and small intestine.

Functionally, over-expression suppresses AP1, CREB, NFAT, and NF-kB transcriptional activation, and delays cell cycle progression at S phase. The protein is Programmed cell death protein 2-like (PDCD2L) of Homo sapiens (Human).